Consider the following 346-residue polypeptide: Dihydroorotase (346 aa).

Positions 14 and 16 each coordinate Zn(2+). Residues 16–18 (HLR) and N42 contribute to the substrate site. K100, H137, and H175 together coordinate Zn(2+). Residue K100 is modified to N6-carboxylysine. Substrate is bound at residue H137. L220 is a substrate binding site. A Zn(2+)-binding site is contributed by D248. The active site involves D248. Substrate-binding residues include H252 and A264.

The protein belongs to the metallo-dependent hydrolases superfamily. DHOase family. Class II DHOase subfamily. As to quaternary structure, homodimer. Requires Zn(2+) as cofactor.

It catalyses the reaction (S)-dihydroorotate + H2O = N-carbamoyl-L-aspartate + H(+). It functions in the pathway pyrimidine metabolism; UMP biosynthesis via de novo pathway; (S)-dihydroorotate from bicarbonate: step 3/3. In terms of biological role, catalyzes the reversible cyclization of carbamoyl aspartate to dihydroorotate. The sequence is that of Dihydroorotase from Cereibacter sphaeroides (strain ATCC 17025 / ATH 2.4.3) (Rhodobacter sphaeroides).